We begin with the raw amino-acid sequence, 1261 residues long: Structural maintenance of chromosomes protein 3 (1261 aa).

2 coiled-coil regions span residues 188–332 (EKIQ…HSLQ) and 406–450 (LIAD…YEMD). The region spanning 534–645 (NGYYGTVIEL…IIVRTLDQAA (112 aa)) is the SMC hinge domain. 3 coiled-coil regions span residues 677 to 826 (KRSK…MDLM), 857 to 930 (NERR…DKIT), and 1023 to 1085 (RELE…ENRK). Residues 1159 to 1193 (LSGGQKSLVALAIIFSIQKCDPAPFYLFDEIDAAL) carry the DA-box motif.

It belongs to the SMC family. SMC3 subfamily. Component of the cohesin complex, composed of the smc-1 and smc-3 heterodimer attached via their SMC hinge domain, scc-1 which links them, and scc-3. Interacts with scc-1, smc-1 and tim-1.

The protein resides in the nucleus. It is found in the chromosome. Involved in chromosome cohesion during cell cycle and in DNA repair. Involved in the repair of double strand breaks during mitosis and meiosis. Required for chromosome segregation during mitosis. Central component of cohesin complex. The cohesin complex is required for the cohesion of sister chromatids after DNA replication. The cohesin complex apparently forms a large proteinaceous ring within which sister chromatids can be trapped. At anaphase, the complex is cleaved and dissociates from chromatin, allowing sister chromatids to segregate. Required for the localization of lab-1 to meiotic and mitotic chromosomes. This chain is Structural maintenance of chromosomes protein 3, found in Caenorhabditis elegans.